A 235-amino-acid chain; its full sequence is Probable transcriptional regulatory protein Ccon26_04940 (235 aa).

It belongs to the TACO1 family.

The protein resides in the cytoplasm. In Campylobacter concisus (strain 13826), this protein is Probable transcriptional regulatory protein Ccon26_04940.